A 176-amino-acid polypeptide reads, in one-letter code: NADH-quinone oxidoreductase subunit I 1 (176 aa).

2 4Fe-4S ferredoxin-type domains span residues 45–77 (IVLT…MEAT) and 87–116 (RWFR…MTPD). 8 residues coordinate [4Fe-4S] cluster: Cys-57, Cys-60, Cys-63, Cys-67, Cys-96, Cys-99, Cys-102, and Cys-106.

It belongs to the complex I 23 kDa subunit family. As to quaternary structure, NDH-1 is composed of 14 different subunits. Subunits NuoA, H, J, K, L, M, N constitute the membrane sector of the complex. [4Fe-4S] cluster serves as cofactor.

The protein localises to the cell inner membrane. It carries out the reaction a quinone + NADH + 5 H(+)(in) = a quinol + NAD(+) + 4 H(+)(out). In terms of biological role, NDH-1 shuttles electrons from NADH, via FMN and iron-sulfur (Fe-S) centers, to quinones in the respiratory chain. The immediate electron acceptor for the enzyme in this species is believed to be ubiquinone. Couples the redox reaction to proton translocation (for every two electrons transferred, four hydrogen ions are translocated across the cytoplasmic membrane), and thus conserves the redox energy in a proton gradient. The sequence is that of NADH-quinone oxidoreductase subunit I 1 from Geobacter metallireducens (strain ATCC 53774 / DSM 7210 / GS-15).